The sequence spans 135 residues: MLSPKRTRFRKQHRGRMKGISSRGNRICFGRYALQALEPAWITSRQIEAGRRAMTRYARRGGKIWVRIFPDKPVTVRPTETRMGSGKGSPEYWVSVVKPGRILYEMGGISETVARAAIEIAASKMPIRTQFVIAG.

Belongs to the universal ribosomal protein uL16 family. As to quaternary structure, part of the 50S ribosomal subunit.

It is found in the plastid. It localises to the chloroplast. This is Large ribosomal subunit protein uL16c from Ceratophyllum demersum (Rigid hornwort).